A 635-amino-acid chain; its full sequence is Biosynthetic arginine decarboxylase (635 aa).

The residue at position 100 (K100) is an N6-(pyridoxal phosphate)lysine. 282–292 lines the substrate pocket; that stretch reads VDIGGGLGVDY.

The protein belongs to the Orn/Lys/Arg decarboxylase class-II family. SpeA subfamily. Mg(2+) is required as a cofactor. It depends on pyridoxal 5'-phosphate as a cofactor.

It catalyses the reaction L-arginine + H(+) = agmatine + CO2. The protein operates within amine and polyamine biosynthesis; agmatine biosynthesis; agmatine from L-arginine: step 1/1. In terms of biological role, catalyzes the biosynthesis of agmatine from arginine. This Geobacter metallireducens (strain ATCC 53774 / DSM 7210 / GS-15) protein is Biosynthetic arginine decarboxylase.